A 62-amino-acid polypeptide reads, in one-letter code: DNA-directed RNA polymerase subunit Rpo10 (62 aa).

4 residues coordinate Zn(2+): Cys6, Cys9, Cys43, and Cys44.

It belongs to the archaeal Rpo10/eukaryotic RPB10 RNA polymerase subunit family. In terms of assembly, part of the RNA polymerase complex. The cofactor is Zn(2+).

It is found in the cytoplasm. The catalysed reaction is RNA(n) + a ribonucleoside 5'-triphosphate = RNA(n+1) + diphosphate. DNA-dependent RNA polymerase (RNAP) catalyzes the transcription of DNA into RNA using the four ribonucleoside triphosphates as substrates. This Methanocorpusculum labreanum (strain ATCC 43576 / DSM 4855 / Z) protein is DNA-directed RNA polymerase subunit Rpo10.